The sequence spans 928 residues: Type II inositol 3,4-bisphosphate 4-phosphatase (928 aa).

Over residues 1-13 (MEIKEEGTSEEGQ) the composition is skewed to basic and acidic residues. Disordered stretches follow at residues 1–23 (MEIKEEGTSEEGQHFLPAAQAND), 481–516 (ILRKPPSPKVSTEEKSSQHDSPQQLRRQDSIPHHSD), and 548–575 (SRNDKSTGGDSSKDGDADPNLEDSLTSH). A C2 domain is found at 23–165 (DPEDIQFTSI…LKSKEQLLSL (143 aa)). 2 stretches are compositionally biased toward basic and acidic residues: residues 506-516 (RRQDSIPHHSD) and 548-563 (SRNDKSTGGDSSKDGD).

The protein belongs to the inositol 3,4-bisphosphate 4-phosphatase family.

It carries out the reaction a 1,2-diacyl-sn-glycero-3-phospho-(1D-myo-inositol-3,4-bisphosphate) + H2O = a 1,2-diacyl-sn-glycero-3-phospho-(1D-myo-inositol-3-phosphate) + phosphate. The enzyme catalyses 1D-myo-inositol 3,4-bisphosphate + H2O = 1D-myo-inositol 3-phosphate + phosphate. The catalysed reaction is 1D-myo-inositol 1,3,4-trisphosphate + H2O = 1D-myo-inositol 1,3-bisphosphate + phosphate. It participates in signal transduction; phosphatidylinositol signaling pathway. Strongly inhibited by inositol hexakisphosphate. Its function is as follows. Catalyzes the hydrolysis of the 4-position phosphate of phosphatidylinositol 3,4-bisphosphate, inositol 1,3,4-trisphosphate and inositol 3,4-bisphosphate. Plays a role in the late stages of macropinocytosis by dephosphorylating phosphatidylinositol 3,4-bisphosphate in membrane ruffles. The lipid phosphatase activity is critical for tumor suppressor function. Antagonizes the PI3K-AKT/PKB signaling pathway by dephosphorylating phosphoinositides and thereby modulating cell cycle progression and cell survival. This chain is Type II inositol 3,4-bisphosphate 4-phosphatase (Inpp4b), found in Rattus norvegicus (Rat).